The chain runs to 315 residues: Neuroguidin (315 aa).

2 disordered regions span residues 127–201 (SEND…KQKR) and 289–315 (VQDI…RKRK). Composition is skewed to basic and acidic residues over residues 159–168 (KTKEQKEPSG) and 182–200 (YDGD…EKQK). Positions 181-206 (HYDGDLTEADRQKERVEKQKRAALRS) form a coiled coil. Residues 296-315 (KPKKKKIIKKGKKKVFRKRK) show a composition bias toward basic residues.

This sequence belongs to the SAS10 family. In terms of assembly, part of the small subunit (SSU) processome, composed of more than 70 proteins and the RNA chaperone small nucleolar RNA (snoRNA) U3.

The protein localises to the nucleus. The protein resides in the nucleolus. It localises to the chromosome. It is found in the centromere. Its subcellular location is the cytoplasm. The protein localises to the cell projection. The protein resides in the axon. It localises to the dendrite. It is found in the filopodium. Functionally, part of the small subunit (SSU) processome, first precursor of the small eukaryotic ribosomal subunit. During the assembly of the SSU processome in the nucleolus, many ribosome biogenesis factors, an RNA chaperone and ribosomal proteins associate with the nascent pre-rRNA and work in concert to generate RNA folding, modifications, rearrangements and cleavage as well as targeted degradation of pre-ribosomal RNA by the RNA exosome. Its dissociation from the complex determines the transition from state pre-A1 to state pre-A1*. May inhibit mRNA translation. This is Neuroguidin (ngdn) from Danio rerio (Zebrafish).